A 340-amino-acid chain; its full sequence is Ketol-acid reductoisomerase (NADP(+)) (340 aa).

The KARI N-terminal Rossmann domain occupies 3-183 (LSVYYDKDCN…GGGRTGIIET (181 aa)). Residues 26 to 29 (FGSQ), S54, and 84 to 87 (DELQ) contribute to the NADP(+) site. Residue H109 is part of the active site. G135 provides a ligand contact to NADP(+). A KARI C-terminal knotted domain is found at 184–329 (TFKDETETDL…ERLRAMMPWI (146 aa)). D192, E196, E228, and E232 together coordinate Mg(2+). S253 contributes to the substrate binding site.

Belongs to the ketol-acid reductoisomerase family. Requires Mg(2+) as cofactor.

The catalysed reaction is (2R)-2,3-dihydroxy-3-methylbutanoate + NADP(+) = (2S)-2-acetolactate + NADPH + H(+). It catalyses the reaction (2R,3R)-2,3-dihydroxy-3-methylpentanoate + NADP(+) = (S)-2-ethyl-2-hydroxy-3-oxobutanoate + NADPH + H(+). The protein operates within amino-acid biosynthesis; L-isoleucine biosynthesis; L-isoleucine from 2-oxobutanoate: step 2/4. It participates in amino-acid biosynthesis; L-valine biosynthesis; L-valine from pyruvate: step 2/4. Functionally, involved in the biosynthesis of branched-chain amino acids (BCAA). Catalyzes an alkyl-migration followed by a ketol-acid reduction of (S)-2-acetolactate (S2AL) to yield (R)-2,3-dihydroxy-isovalerate. In the isomerase reaction, S2AL is rearranged via a Mg-dependent methyl migration to produce 3-hydroxy-3-methyl-2-ketobutyrate (HMKB). In the reductase reaction, this 2-ketoacid undergoes a metal-dependent reduction by NADPH to yield (R)-2,3-dihydroxy-isovalerate. This is Ketol-acid reductoisomerase (NADP(+)) from Wolinella succinogenes (strain ATCC 29543 / DSM 1740 / CCUG 13145 / JCM 31913 / LMG 7466 / NCTC 11488 / FDC 602W) (Vibrio succinogenes).